The sequence spans 534 residues: CTP synthase (534 aa).

Positions 1 to 267 (MTKYIFVTGG…DQIVCDHLKL (267 aa)) are amidoligase domain. Ser13 contributes to the CTP binding site. Ser13 provides a ligand contact to UTP. An ATP-binding site is contributed by 14–19 (SIGKGI). Tyr54 serves as a coordination point for L-glutamine. ATP is bound at residue Asp71. Residues Asp71 and Glu141 each contribute to the Mg(2+) site. CTP-binding positions include 148–150 (DIE), 188–193 (KTKPTQ), and Lys224. UTP-binding positions include 188-193 (KTKPTQ) and Lys224. 240–242 (RDV) is a binding site for ATP. Residues 292-534 (KIALVGKYVE…FVTAAIKNSN (243 aa)) form the Glutamine amidotransferase type-1 domain. Residue Gly354 coordinates L-glutamine. The active-site Nucleophile; for glutamine hydrolysis is the Cys381. Residues 382–385 (LGMQ), Glu405, and Arg463 contribute to the L-glutamine site. Residues His508 and Glu510 contribute to the active site.

The protein belongs to the CTP synthase family. In terms of assembly, homotetramer.

The catalysed reaction is UTP + L-glutamine + ATP + H2O = CTP + L-glutamate + ADP + phosphate + 2 H(+). It catalyses the reaction L-glutamine + H2O = L-glutamate + NH4(+). The enzyme catalyses UTP + NH4(+) + ATP = CTP + ADP + phosphate + 2 H(+). The protein operates within pyrimidine metabolism; CTP biosynthesis via de novo pathway; CTP from UDP: step 2/2. Allosterically activated by GTP, when glutamine is the substrate; GTP has no effect on the reaction when ammonia is the substrate. The allosteric effector GTP functions by stabilizing the protein conformation that binds the tetrahedral intermediate(s) formed during glutamine hydrolysis. Inhibited by the product CTP, via allosteric rather than competitive inhibition. Functionally, catalyzes the ATP-dependent amination of UTP to CTP with either L-glutamine or ammonia as the source of nitrogen. Regulates intracellular CTP levels through interactions with the four ribonucleotide triphosphates. The protein is CTP synthase of Streptococcus pyogenes serotype M4 (strain MGAS10750).